Here is a 326-residue protein sequence, read N- to C-terminus: Small ribosomal subunit biogenesis GTPase RsgA (326 aa).

The 162-residue stretch at 80-241 (LSHQMHIIAS…IIDTPGIKGF (162 aa)) folds into the CP-type G domain. Residues 129–132 (NKID) and 183–191 (GHSGVGKST) each bind GTP. C265, C270, H272, and C278 together coordinate Zn(2+).

The protein belongs to the TRAFAC class YlqF/YawG GTPase family. RsgA subfamily. In terms of assembly, monomer. Associates with 30S ribosomal subunit, binds 16S rRNA. Zn(2+) serves as cofactor.

It is found in the cytoplasm. Its function is as follows. One of several proteins that assist in the late maturation steps of the functional core of the 30S ribosomal subunit. Helps release RbfA from mature subunits. May play a role in the assembly of ribosomal proteins into the subunit. Circularly permuted GTPase that catalyzes slow GTP hydrolysis, GTPase activity is stimulated by the 30S ribosomal subunit. The polypeptide is Small ribosomal subunit biogenesis GTPase RsgA (Flavobacterium psychrophilum (strain ATCC 49511 / DSM 21280 / CIP 103535 / JIP02/86)).